A 904-amino-acid chain; its full sequence is DNA mismatch repair protein MutS (904 aa).

638 to 645 lines the ATP pocket; it reads GPNMAGKS. The interval 825-869 is disordered; it reads KSKADGTRRPASYHEAQPLLPGMPEPPSTASAEPPQTVTPPEPPV.

This sequence belongs to the DNA mismatch repair MutS family.

This protein is involved in the repair of mismatches in DNA. It is possible that it carries out the mismatch recognition step. This protein has a weak ATPase activity. This Oleidesulfovibrio alaskensis (strain ATCC BAA-1058 / DSM 17464 / G20) (Desulfovibrio alaskensis) protein is DNA mismatch repair protein MutS.